Here is a 764-residue protein sequence, read N- to C-terminus: DNA polymerase 3 (764 aa).

The protein belongs to the DNA polymerase type-B family.

The enzyme catalyses DNA(n) + a 2'-deoxyribonucleoside 5'-triphosphate = DNA(n+1) + diphosphate. The protein is DNA polymerase 3 (dpo3) of Saccharolobus solfataricus (strain ATCC 35092 / DSM 1617 / JCM 11322 / P2) (Sulfolobus solfataricus).